The chain runs to 140 residues: ATP synthase epsilon chain (140 aa).

The protein belongs to the ATPase epsilon chain family. As to quaternary structure, F-type ATPases have 2 components, CF(1) - the catalytic core - and CF(0) - the membrane proton channel. CF(1) has five subunits: alpha(3), beta(3), gamma(1), delta(1), epsilon(1). CF(0) has three main subunits: a, b and c.

The protein localises to the cell inner membrane. Produces ATP from ADP in the presence of a proton gradient across the membrane. The polypeptide is ATP synthase epsilon chain (Stenotrophomonas maltophilia (strain R551-3)).